The following is a 601-amino-acid chain: Glutathione-regulated potassium-efflux system protein KefB (601 aa).

13 helical membrane-spanning segments follow: residues 5–25 (SLLM…PLAA), 29–49 (IGAV…GLGF), 55–75 (EILH…GLEL), 87–107 (IFGV…GLLW), 115–135 (AAII…LQLM), 152–172 (VLLF…LLAG), 180–202 (WMKL…YLLR), 207–227 (FIAA…LVLG), 230–250 (LFME…GILL), 268–288 (GLLL…GVLY), 291–311 (ILEI…VLYL), 324–344 (LQFS…FSAA), and 356–376 (PLLL…MQGV). Positions 400–519 (KPQVIVVGFG…AGVTQFSRET (120 aa)) constitute an RCK N-terminal domain.

This sequence belongs to the monovalent cation:proton antiporter 2 (CPA2) transporter (TC 2.A.37) family. KefB subfamily. In terms of assembly, interacts with the regulatory subunit KefG.

The protein resides in the cell inner membrane. Functionally, pore-forming subunit of a potassium efflux system that confers protection against electrophiles. Catalyzes K(+)/H(+) antiport. The chain is Glutathione-regulated potassium-efflux system protein KefB from Erwinia tasmaniensis (strain DSM 17950 / CFBP 7177 / CIP 109463 / NCPPB 4357 / Et1/99).